Consider the following 98-residue polypeptide: La1-like protein 13 (98 aa).

The signal sequence occupies residues methionine 1–glycine 24. A Lysine amide modification is found at lysine 97.

The protein belongs to the scorpion La1-like peptide family. Contains 4 disulfide bonds. Expressed by the venom gland.

The protein resides in the secreted. The chain is La1-like protein 13 from Urodacus yaschenkoi (Inland robust scorpion).